A 411-amino-acid chain; its full sequence is Multidrug resistance protein MdtA (411 aa).

The signal sequence occupies residues 1-26; the sequence is MNNNKKTKKRFSLIIILLIVIAGAIA. A compositionally biased stretch (polar residues) spans 35–55; it reads SAPPVSKDTPTANTPNRSTAG. The tract at residues 35–64 is disordered; that stretch reads SAPPVSKDTPTANTPNRSTAGSRRPPMPPV.

This sequence belongs to the membrane fusion protein (MFP) (TC 8.A.1) family. As to quaternary structure, part of a tripartite efflux system composed of MdtA, MdtB and MdtC.

The protein resides in the cell inner membrane. The sequence is that of Multidrug resistance protein MdtA from Proteus mirabilis (strain HI4320).